A 250-amino-acid chain; its full sequence is 5'-nucleotidase SurE (250 aa).

A divalent metal cation contacts are provided by Asp8, Asp9, Ser39, and Asn91.

It belongs to the SurE nucleotidase family. The cofactor is a divalent metal cation.

It is found in the cytoplasm. The catalysed reaction is a ribonucleoside 5'-phosphate + H2O = a ribonucleoside + phosphate. In terms of biological role, nucleotidase that shows phosphatase activity on nucleoside 5'-monophosphates. In Syntrophotalea carbinolica (strain DSM 2380 / NBRC 103641 / GraBd1) (Pelobacter carbinolicus), this protein is 5'-nucleotidase SurE.